Here is a 356-residue protein sequence, read N- to C-terminus: Sterol-4-alpha-carboxylate 3-dehydrogenase, decarboxylating (356 aa).

Met-1 is modified (N-acetylmethionine). The active-site Proton acceptor is the Tyr-155. Residue Lys-159 participates in NAD(+) binding. A helical transmembrane segment spans residues 281-301; it reads WLAYYLALLVSLLVMVISPVI. The Prevents secretion from ER motif lies at 353 to 356; the sequence is RKVM.

The protein belongs to the 3-beta-HSD family. In terms of assembly, homodimer.

It localises to the endoplasmic reticulum membrane. Its subcellular location is the lipid droplet. It carries out the reaction a 3beta-hydroxysteroid-4alpha-carboxylate + NADP(+) = a 3-oxosteroid + CO2 + NADPH. The enzyme catalyses a 3beta-hydroxysteroid-4alpha-carboxylate + NAD(+) = a 3-oxosteroid + CO2 + NADH. It catalyses the reaction 4alpha-carboxyzymosterol + NADP(+) = zymosterone + CO2 + NADPH. The catalysed reaction is 4alpha-carboxy-4beta-methyl-5alpha-cholest-8-en-3beta-ol + NADP(+) = 4alpha-methyl-5alpha-cholest-8-en-3-one + CO2 + NADPH. It carries out the reaction 4alpha-carboxy-5alpha-cholest-8-ene-3beta-ol + NADP(+) = 5alpha-cholest-8-en-3-one + CO2 + NADPH. The enzyme catalyses 4beta-methylzymosterol-4alpha-carboxylate + NADP(+) = 3-dehydro-4-methylzymosterol + CO2 + NADPH. It catalyses the reaction 4beta-methylzymosterol-4alpha-carboxylate + NAD(+) = 3-dehydro-4-methylzymosterol + CO2 + NADH. The catalysed reaction is 4alpha-carboxy-5alpha-cholest-8-ene-3beta-ol + NAD(+) = 5alpha-cholest-8-en-3-one + CO2 + NADH. It carries out the reaction 4alpha-carboxy-4beta-methyl-5alpha-cholest-8-en-3beta-ol + NAD(+) = 4alpha-methyl-5alpha-cholest-8-en-3-one + CO2 + NADH. The enzyme catalyses 4alpha-carboxyzymosterol + NAD(+) = zymosterone + CO2 + NADH. It participates in steroid biosynthesis; zymosterol biosynthesis; zymosterol from lanosterol: step 4/6. Its function is as follows. Catalyzes the NAD(P)(+)-dependent oxidative decarboxylation of the C4 methyl groups of 4-alpha-carboxysterols in post-squalene cholesterol biosynthesis. Also plays a role in the regulation of the endocytic trafficking of EGFR. The sequence is that of Sterol-4-alpha-carboxylate 3-dehydrogenase, decarboxylating (NSDHL) from Bos taurus (Bovine).